Here is a 593-residue protein sequence, read N- to C-terminus: Meiotic recombination protein REC8 homolog (593 aa).

S149 bears the Phosphoserine mark. Phosphothreonine is present on T164. S192 is modified (phosphoserine). Disordered regions lie at residues 247 to 282 (QRRASPPLDESKEEPRALEGDGLVSSLSPPAPAQVE), 317 to 344 (ELRLPAPPSIEKRPPSPQRPPRRRRRGR), and 422 to 444 (PQLETEETVEEERVADKEERRKT). Over residues 255-265 (DESKEEPRALE) the composition is skewed to basic and acidic residues. Positions 432–444 (EERVADKEERRKT) are enriched in basic and acidic residues.

Belongs to the rad21 family. As to quaternary structure, interacts (phosphorylated and unphosphorylated form) with SMC3. Interacts with SYCP3. Interacts (phosphorylated and unphosphorylated form) with SMC1B. Does not interact with SMC1A. Interacts with RAD51. Forms a complex with EWSR1, PRDM9, SYCP3 and SYCP1; complex formation is dependent of phosphorylated form of REC8 and requires PRDM9 bound to hotspot DNA; EWSR1 joins PRDM9 with the chromosomal axis through REC8. Phosphorylated.

Its subcellular location is the nucleus. The protein resides in the chromosome. The protein localises to the centromere. Functionally, required during meiosis for separation of sister chromatids and homologous chromosomes. Proteolytic cleavage of REC8 on chromosome arms by separin during anaphase I allows for homologous chromosome separation in meiosis I and cleavage of REC8 on centromeres during anaphase II allows for sister chromatid separation in meiosis II. The sequence is that of Meiotic recombination protein REC8 homolog from Rattus norvegicus (Rat).